A 536-amino-acid polypeptide reads, in one-letter code: Pentatricopeptide repeat-containing protein At2g06000 (536 aa).

PPR repeat units follow at residues 102-136, 137-167, 170-200, 205-239, 240-274, 276-310, 311-345, 346-380, 381-415, 416-450, 451-485, and 486-523; these read SFWT…GVSP, NNRL…SFEV, CCMV…HLRF, DTKT…GCEP, DIVT…SVCS, DVVT…GIYP, TNVT…GCFP, DVVT…GMFP, NAFT…DIIP, QPFM…KCKP, DKIT…GCSP, and DKIT…NVVP.

It belongs to the PPR family. P subfamily.

In Arabidopsis thaliana (Mouse-ear cress), this protein is Pentatricopeptide repeat-containing protein At2g06000.